The sequence spans 173 residues: NADH-ubiquinone oxidoreductase chain 6 (173 aa).

5 helical membrane passes run 1–21 (MTYFMLFLGLCFVLGGLGVAS), 27–47 (YGVVGLVLASVVGCGWLLSLG), 48–68 (VSFVSLVLFMVYLGGMLVVFV), 87–107 (VVGYGVSFIAVLVVGVVIGGL), and 139–159 (CGVGMFLVAGWGLLLTLFVVL).

This sequence belongs to the complex I subunit 6 family.

It is found in the mitochondrion membrane. It catalyses the reaction a ubiquinone + NADH + 5 H(+)(in) = a ubiquinol + NAD(+) + 4 H(+)(out). Core subunit of the mitochondrial membrane respiratory chain NADH dehydrogenase (Complex I) that is believed to belong to the minimal assembly required for catalysis. Complex I functions in the transfer of electrons from NADH to the respiratory chain. The immediate electron acceptor for the enzyme is believed to be ubiquinone. This Synthliboramphus hypoleucus (Guadalupe murrelet) protein is NADH-ubiquinone oxidoreductase chain 6 (MT-ND6).